Here is a 313-residue protein sequence, read N- to C-terminus: Protein FixB (313 aa).

An FAD-binding site is contributed by 255-283 (LYLAVGISGQIQHMVGANASQTIFAINKD).

This sequence belongs to the ETF alpha-subunit/FixB family. Heterodimer of FixA and FixB.

It participates in amine and polyamine metabolism; carnitine metabolism. In terms of biological role, required for anaerobic carnitine reduction. May bring reductant to CaiA. The polypeptide is Protein FixB (Escherichia coli (strain 55989 / EAEC)).